Here is a 380-residue protein sequence, read N- to C-terminus: Protein COS12 (380 aa).

The Cytoplasmic portion of the chain corresponds to 1 to 70 (MDGAKFENTV…WKIRGKRHYL (70 aa)). The chain crosses the membrane as a helical span at residues 71 to 91 (VIVTALMFEVLYFLWTYSYIF). Topologically, residues 92-231 (RERTLGKQVS…KLLWAFKEVT (140 aa)) are extracellular. A helical membrane pass occupies residues 232–252 (IMNSRFAFFSIAYLNGLLTIP). The Cytoplasmic segment spans residues 253-257 (RLRNS). The chain crosses the membrane as a helical span at residues 258 to 278 (LHILYVCAVLSSMIIEYLIGI). Over 279 to 380 (DKFRFKSMNL…KEAQSACNDV (102 aa)) the chain is Extracellular.

It belongs to the DUP/COS family.

The protein localises to the membrane. This Saccharomyces cerevisiae (strain ATCC 204508 / S288c) (Baker's yeast) protein is Protein COS12 (COS12).